The following is a 713-amino-acid chain: Peroxisomal biogenesis factor 8 (713 aa).

The segment at 1 to 31 (MYRLGSQGRSIQSQLQNGDSSSGRPLQLQGT) is disordered. The span at 7 to 30 (QGRSIQSQLQNGDSSSGRPLQLQG) shows a compositional bias: polar residues. Residues 711–713 (AKL) carry the Microbody targeting signal motif.

Interacts with PEX5 (via N-terminus).

It is found in the peroxisome membrane. Its function is as follows. Essential component of the machinery required for the import of both PTS1 and PTS2 (and perhaps all) peroxisomal matrix proteins. Binding of PEX8 to the N-terminus of PEX5 cargo receptor induces a conformational change of the TPR domains and decrease their binding affinity to cargo, facilitating the release of the PTS1 proteins within the peroxisome. This is Peroxisomal biogenesis factor 8 from Komagataella phaffii (strain GS115 / ATCC 20864) (Yeast).